The sequence spans 179 residues: MTEKIISEIILDLVFQCNDFSQFSNKLKDTKSKLIFESIFWEKVFLSWINIILKKKDYELPNYISEKKSFSLGLRIISNQEIASLNKKWMQKNGPTDVLSFPIISDESLNNLDHIELGDIFISLEMALEQSYEYKHTIYREMIWLASHGFLHLLGWEHNNENDLENMLNLQEYLITRLD.

Positions 148, 152, and 158 each coordinate Zn(2+).

It belongs to the endoribonuclease YbeY family. Zn(2+) is required as a cofactor.

It localises to the cytoplasm. Functionally, single strand-specific metallo-endoribonuclease involved in late-stage 70S ribosome quality control and in maturation of the 3' terminus of the 16S rRNA. This Prochlorococcus marinus (strain MIT 9215) protein is Endoribonuclease YbeY.